An 877-amino-acid chain; its full sequence is Dolichyl-phosphate-mannose--protein mannosyltransferase 1 (877 aa).

A glycan (N-linked (GlcNAc...) asparagine) is linked at N83. The next 2 membrane-spanning stretches (helical) occupy residues 109-129 (FFMD…GAIG) and 150-170 (YIFM…LCYL). N-linked (GlcNAc...) asparagine glycosylation occurs at N195. The next 4 helical transmembrane spans lie at 196-216 (VTIS…AAAI), 226-246 (IPFT…LGLA), 252-272 (VGLF…WFLI), and 291-311 (IILL…HFQL). One can recognise an MIR 1 domain in the interval 340-394 (TEQVGLGSVVTIRHVDTQGGYLHSHEHFYQTGSKQQQITLYPHLDSNNKWLIEPY). Residues N395 and N400 are each glycosylated (N-linked (GlcNAc...) asparagine). 2 MIR domains span residues 403 to 462 (FVPL…VEIV) and 472 to 528 (QTFV…IETN). A run of 4 helical transmembrane segments spans residues 604-624 (TWWA…VTVF), 643-663 (VQTF…FIMG), 666-686 (LFLH…GHFF), and 700-720 (FQQV…VFYV). N721 carries N-linked (GlcNAc...) asparagine glycosylation. The interval 778-877 (VVEAKQTPKA…EDESVHQVQQ (100 aa)) is disordered. Basic and acidic residues-rich tracts occupy residues 783–799 (QTPK…DHIE), 807–816 (VEEKEVKEEV), and 847–857 (NDEKSVEEKQQ).

This sequence belongs to the glycosyltransferase 39 family. PMT1 and PMT2 form a functional heterodimer.

It is found in the endoplasmic reticulum membrane. The catalysed reaction is a di-trans,poly-cis-dolichyl beta-D-mannosyl phosphate + L-seryl-[protein] = 3-O-(alpha-D-mannosyl)-L-seryl-[protein] + a di-trans,poly-cis-dolichyl phosphate + H(+). The enzyme catalyses a di-trans,poly-cis-dolichyl beta-D-mannosyl phosphate + L-threonyl-[protein] = 3-O-(alpha-D-mannosyl)-L-threonyl-[protein] + a di-trans,poly-cis-dolichyl phosphate + H(+). Its pathway is protein modification; protein glycosylation. Its function is as follows. Protein mannosyltransferase (PMT) involved in hyphal growth and drug sensitivity. Transfers mannose from Dol-P-mannose to Ser or Thr residues on proteins. PMT1, PMT2 and PMT4 account for most of the protein-O-glycosylation activity, while PMT5 and PMT6 may specifically modulate a much narrower spectrum of target proteins. Accounts for the O-glycosylation of the cell wall proteins KRE9, PIR2, RHD3, and ALS1, as well as the SEC20 t-SNARE component. O-glycosylation of SEC20 is essential for its stability. Required for filamentation and early phases of biofilm formation. The chain is Dolichyl-phosphate-mannose--protein mannosyltransferase 1 (PMT1) from Candida albicans (strain SC5314 / ATCC MYA-2876) (Yeast).